Reading from the N-terminus, the 427-residue chain is Serine hydroxymethyltransferase (427 aa).

(6S)-5,6,7,8-tetrahydrofolate-binding positions include leucine 118 and 122 to 124 (GHL). Lysine 227 is subject to N6-(pyridoxal phosphate)lysine. Residue 351–353 (SPF) coordinates (6S)-5,6,7,8-tetrahydrofolate.

Belongs to the SHMT family. In terms of assembly, homodimer. The cofactor is pyridoxal 5'-phosphate.

The protein localises to the cytoplasm. It carries out the reaction (6R)-5,10-methylene-5,6,7,8-tetrahydrofolate + glycine + H2O = (6S)-5,6,7,8-tetrahydrofolate + L-serine. The protein operates within one-carbon metabolism; tetrahydrofolate interconversion. It participates in amino-acid biosynthesis; glycine biosynthesis; glycine from L-serine: step 1/1. Functionally, catalyzes the reversible interconversion of serine and glycine with tetrahydrofolate (THF) serving as the one-carbon carrier. This reaction serves as the major source of one-carbon groups required for the biosynthesis of purines, thymidylate, methionine, and other important biomolecules. Also exhibits THF-independent aldolase activity toward beta-hydroxyamino acids, producing glycine and aldehydes, via a retro-aldol mechanism. This chain is Serine hydroxymethyltransferase, found in Thermotoga petrophila (strain ATCC BAA-488 / DSM 13995 / JCM 10881 / RKU-1).